Consider the following 357-residue polypeptide: Arginine kinase (357 aa).

Residues 9–91 form the Phosphagen kinase N-terminal domain; sequence KLEAGFKKLQ…FDPIIDDYHG (83 aa). A substrate-binding site is contributed by 64–68; sequence GVGIY. The Phosphagen kinase C-terminal domain occupies 119 to 356; sequence FIISTRVRCG…LEMIKMEKAA (238 aa). ATP-binding positions include 122–126 and His185; that span reads STRVR. Substrate is bound at residue Glu225. Arg229 serves as a coordination point for ATP. Cys271 is a substrate binding site. Residues 280–284 and 309–314 each bind ATP; these read RASVH and RGTRGE. Substrate is bound at residue Glu314.

The protein belongs to the ATP:guanido phosphotransferase family. In terms of assembly, monomer.

It localises to the cytoplasm. It carries out the reaction L-arginine + ATP = N(omega)-phospho-L-arginine + ADP + H(+). Its function is as follows. Catalyzes the reversible transfer of the terminal phosphoryl group of ATP to L-arginine. This is Arginine kinase from Limulus polyphemus (Atlantic horseshoe crab).